A 66-amino-acid chain; its full sequence is Large ribosomal subunit protein bL35 (66 aa).

This sequence belongs to the bacterial ribosomal protein bL35 family.

This Synechococcus sp. (strain RCC307) protein is Large ribosomal subunit protein bL35.